Consider the following 326-residue polypeptide: Putative ankyrin repeat protein L25 (326 aa).

ANK repeat units follow at residues 11–40, 42–65, 66–95, 96–125, 127–154, 155–184, 185–214, 216–244, 246–274, and 275–304; these read RSEY…DLNV, KLFY…NIHV, DDEF…DIHV, NDDA…DIHA, NELV…DIHA, EDDE…NFRA, ENDY…DIHA, DEYA…DIHA, NDYG…NIHA, and KDDY…NIHA.

The polypeptide is Putative ankyrin repeat protein L25 (Acanthamoeba polyphaga mimivirus (APMV)).